The primary structure comprises 380 residues: Queuine tRNA-ribosyltransferase (380 aa).

The active-site Proton acceptor is the Asp-96. Residues 96 to 100, Asp-150, Gln-193, and Gly-220 each bind substrate; that span reads DSGGF. An RNA binding region spans residues 251–257; the sequence is GVGAPDS. Asp-270 serves as the catalytic Nucleophile. An RNA binding; important for wobble base 34 recognition region spans residues 275-279; it reads TRIAR. Zn(2+)-binding residues include Cys-308, Cys-310, Cys-313, and His-339.

Belongs to the queuine tRNA-ribosyltransferase family. In terms of assembly, homodimer. Within each dimer, one monomer is responsible for RNA recognition and catalysis, while the other monomer binds to the replacement base PreQ1. Zn(2+) is required as a cofactor.

The enzyme catalyses 7-aminomethyl-7-carbaguanine + guanosine(34) in tRNA = 7-aminomethyl-7-carbaguanosine(34) in tRNA + guanine. It functions in the pathway tRNA modification; tRNA-queuosine biosynthesis. Its function is as follows. Catalyzes the base-exchange of a guanine (G) residue with the queuine precursor 7-aminomethyl-7-deazaguanine (PreQ1) at position 34 (anticodon wobble position) in tRNAs with GU(N) anticodons (tRNA-Asp, -Asn, -His and -Tyr). Catalysis occurs through a double-displacement mechanism. The nucleophile active site attacks the C1' of nucleotide 34 to detach the guanine base from the RNA, forming a covalent enzyme-RNA intermediate. The proton acceptor active site deprotonates the incoming PreQ1, allowing a nucleophilic attack on the C1' of the ribose to form the product. After dissociation, two additional enzymatic reactions on the tRNA convert PreQ1 to queuine (Q), resulting in the hypermodified nucleoside queuosine (7-(((4,5-cis-dihydroxy-2-cyclopenten-1-yl)amino)methyl)-7-deazaguanosine). The protein is Queuine tRNA-ribosyltransferase of Streptococcus thermophilus (strain ATCC BAA-491 / LMD-9).